The sequence spans 149 residues: Small ribosomal subunit protein bS18c (149 aa).

Positions 1 to 23 (MDKITGPFRKSKKSFRKPLPPIQ) are disordered.

This sequence belongs to the bacterial ribosomal protein bS18 family. In terms of assembly, part of the 30S ribosomal subunit.

It localises to the plastid. This chain is Small ribosomal subunit protein bS18c, found in Cuscuta obtusiflora (Peruvian dodder).